Here is a 369-residue protein sequence, read N- to C-terminus: MSEIVNGRGSGIVLLCRAGFEGDCAAEIQDKTAELGVYGYCQTQPEQAYVTYHCQHEEAEHIARKLTLKDLVFAREMFALLGPVKVAGIEDRASEVIKVLKPHQETFGLAGELRVGTPDTNEANQLSKFCRKFSVPLRQALRKEELLSNKPLAKRPMLHVLFVNPAHALVGYSYSYNQTLHNGGIVRLRMSKEAPSRSTLKLDEAFQVFVPENEHEKRVHSGMKAVDLGAAPGGWTYQLVRRGMMVQAVDNGPMAESLMETGQVKHIQEDGFKFRPKRKNVTWLVCDMVEKPARVGELMTSWLLEGDCEEAIFNLKLPMRQRYAAVKGYLDQIKEQLQTEGTKPFEIQAKHLYHDREEITVHLRWLPRS.

S-adenosyl-L-methionine-binding positions include serine 198, 231-234 (APGG), aspartate 250, aspartate 270, and aspartate 287. Residue lysine 316 is the Proton acceptor of the active site.

It belongs to the class I-like SAM-binding methyltransferase superfamily. RNA methyltransferase RlmE family. RlmM subfamily. In terms of assembly, monomer.

It is found in the cytoplasm. The catalysed reaction is cytidine(2498) in 23S rRNA + S-adenosyl-L-methionine = 2'-O-methylcytidine(2498) in 23S rRNA + S-adenosyl-L-homocysteine + H(+). Catalyzes the 2'-O-methylation at nucleotide C2498 in 23S rRNA. This is Ribosomal RNA large subunit methyltransferase M from Idiomarina loihiensis (strain ATCC BAA-735 / DSM 15497 / L2-TR).